We begin with the raw amino-acid sequence, 194 residues long: Probable WRKY transcription factor 51 (194 aa).

The interval S58–R97 is disordered. Basic and acidic residues predominate over residues S76 to H96. The segment at residues S104 to L169 is a DNA-binding region (WRKY).

Belongs to the WRKY group II-c family. Interacts with CAMBP25/VQ15.

It is found in the nucleus. In terms of biological role, transcription factor. Interacts specifically with the W box (5'-(T)TGAC[CT]-3'), a frequently occurring elicitor-responsive cis-acting element. Involved in defense responses. May act as positive regulator of salicylic acid (SA)-mediated signaling and negative regulator of jasmonic acid (JA)-mediated signaling. This chain is Probable WRKY transcription factor 51 (WRKY51), found in Arabidopsis thaliana (Mouse-ear cress).